Reading from the N-terminus, the 336-residue chain is Aspartate--ammonia ligase (336 aa).

Belongs to the class-II aminoacyl-tRNA synthetase family. AsnA subfamily.

It is found in the cytoplasm. The enzyme catalyses L-aspartate + NH4(+) + ATP = L-asparagine + AMP + diphosphate + H(+). It functions in the pathway amino-acid biosynthesis; L-asparagine biosynthesis; L-asparagine from L-aspartate (ammonia route): step 1/1. The sequence is that of Aspartate--ammonia ligase from Ligilactobacillus salivarius (strain UCC118) (Lactobacillus salivarius).